The following is a 246-amino-acid chain: E3 ubiquitin-protein ligase MARCHF2 (246 aa).

An RING-CH-type zinc finger spans residues 56–116; the sequence is DTPSDCPFCR…ELCHTEFAVE (61 aa). 8 residues coordinate Zn(2+): cysteine 64, cysteine 67, cysteine 80, cysteine 82, histidine 90, cysteine 93, cysteine 106, and cysteine 109. The segment at 121 to 246 is required for interaction with IKBKG; it reads PLTEWLKDPG…LKKVAEETPV (126 aa). Helical transmembrane passes span 138 to 158 and 175 to 195; these read LCCD…SGWL and AVGL…WTLV.

Interacts with STX6; the interaction promotes MARCHF2-mediated ubiquitination and degradation of CFTR. Interacts with MARCHF3. Interacts with GOPC/CAL; the interaction leads to CFTR ubiquitination and degradation. Interacts with CFTR; the interaction leads to CFTR ubiqtuitination and degradation. Interacts (via PDZ domain) with DLG1 (via PDZ domains); the interaction leads to DLG1 ubiqtuitination and degradation. Interacts with ERGIC3. Interacts with ADRB2. Interacts with IKBKG/NEMO; during the late stages of macrophage viral and bacterial infection; the interaction leads to ubiquitination and degradation of IKBKG/NEMO. Ubiquitously expressed. Present in liver (at protein level).

It is found in the endoplasmic reticulum membrane. Its subcellular location is the lysosome membrane. The protein resides in the endosome membrane. The protein localises to the golgi apparatus membrane. It localises to the cytoplasm. It is found in the cell membrane. The catalysed reaction is S-ubiquitinyl-[E2 ubiquitin-conjugating enzyme]-L-cysteine + [acceptor protein]-L-lysine = [E2 ubiquitin-conjugating enzyme]-L-cysteine + N(6)-ubiquitinyl-[acceptor protein]-L-lysine.. It functions in the pathway protein modification; protein ubiquitination. Functionally, E3 ubiquitin-protein ligase that may mediate ubiquitination of TFRC and CD86, and promote their subsequent endocytosis and sorting to lysosomes via multivesicular bodies. E3 ubiquitin ligases accept ubiquitin from an E2 ubiquitin-conjugating enzyme in the form of a thioester and then directly transfer the ubiquitin to targeted substrates. Together with GOPC/CAL mediates the ubiquitination and lysosomal degradation of CFTR. Ubiquitinates and therefore mediates the degradation of DLG1. Regulates the intracellular trafficking and secretion of alpha1-antitrypsin/SERPINA1 and HP/haptoglobin via ubiquitination and degradation of the cargo receptor ERGIC3. Negatively regulates the antiviral and antibacterial immune response by repression of the NF-kB and type 1 IFN signaling pathways, via MARCHF2-mediated K48-linked polyubiquitination of IKBKG/NEMO, resulting in its proteasomal degradation. May be involved in endosomal trafficking through interaction with STX6. This Rattus norvegicus (Rat) protein is E3 ubiquitin-protein ligase MARCHF2 (Marchf2).